A 340-amino-acid polypeptide reads, in one-letter code: Ketol-acid reductoisomerase (NADP(+)) (340 aa).

A KARI N-terminal Rossmann domain is found at 2 to 181 (VKMYYEADVK…GCTKAGVIET (180 aa)). NADP(+) is bound by residues 25–28 (YGSQ), R48, S52, and 82–85 (DERQ). The active site involves H107. An NADP(+)-binding site is contributed by G133. The 146-residue stretch at 182–327 (SFREETETDL…EQLRGMMSWI (146 aa)) folds into the KARI C-terminal knotted domain. The Mg(2+) site is built by D190, E194, E226, and E230. A substrate-binding site is contributed by S251.

Belongs to the ketol-acid reductoisomerase family. It depends on Mg(2+) as a cofactor.

It carries out the reaction (2R)-2,3-dihydroxy-3-methylbutanoate + NADP(+) = (2S)-2-acetolactate + NADPH + H(+). It catalyses the reaction (2R,3R)-2,3-dihydroxy-3-methylpentanoate + NADP(+) = (S)-2-ethyl-2-hydroxy-3-oxobutanoate + NADPH + H(+). It functions in the pathway amino-acid biosynthesis; L-isoleucine biosynthesis; L-isoleucine from 2-oxobutanoate: step 2/4. Its pathway is amino-acid biosynthesis; L-valine biosynthesis; L-valine from pyruvate: step 2/4. Functionally, involved in the biosynthesis of branched-chain amino acids (BCAA). Catalyzes an alkyl-migration followed by a ketol-acid reduction of (S)-2-acetolactate (S2AL) to yield (R)-2,3-dihydroxy-isovalerate. In the isomerase reaction, S2AL is rearranged via a Mg-dependent methyl migration to produce 3-hydroxy-3-methyl-2-ketobutyrate (HMKB). In the reductase reaction, this 2-ketoacid undergoes a metal-dependent reduction by NADPH to yield (R)-2,3-dihydroxy-isovalerate. The chain is Ketol-acid reductoisomerase (NADP(+)) from Brevibacillus brevis (strain 47 / JCM 6285 / NBRC 100599).